The sequence spans 181 residues: uncharacterized protein (181 aa).

The first 22 residues, 1–22, serve as a signal peptide directing secretion; it reads MNKKSLLVVLVIALAVVPFAAT.

This is an uncharacterized protein from Halorubrum pleomorphic virus 1 (HRPV-1).